The chain runs to 321 residues: Large ribosomal subunit protein uL3 (321 aa).

Belongs to the universal ribosomal protein uL3 family. Part of the 50S ribosomal subunit. Forms a cluster with proteins L14 and L24e.

In terms of biological role, one of the primary rRNA binding proteins, it binds directly near the 3'-end of the 23S rRNA, where it nucleates assembly of the 50S subunit. The polypeptide is Large ribosomal subunit protein uL3 (Nanoarchaeum equitans (strain Kin4-M)).